Here is a 100-residue protein sequence, read N- to C-terminus: Urease subunit gamma (100 aa).

The protein belongs to the urease gamma subunit family. Heterotrimer of UreA (gamma), UreB (beta) and UreC (alpha) subunits. Three heterotrimers associate to form the active enzyme.

Its subcellular location is the cytoplasm. It catalyses the reaction urea + 2 H2O + H(+) = hydrogencarbonate + 2 NH4(+). It functions in the pathway nitrogen metabolism; urea degradation; CO(2) and NH(3) from urea (urease route): step 1/1. This chain is Urease subunit gamma, found in Bacillus cereus (strain ATCC 10987 / NRS 248).